Consider the following 350-residue polypeptide: MNNTIYILGAGSIGSLLAYELASLKSINNRVILLLRDKSRVNSFKDKNSTLKIDRLFEENVPHLCCQVTASEPSQLNVQSIENMIVTTKAGQTENALSKYLPYLSKNSNILFVQNGMGAVENVCGKLWPEEQNKPSIYQGVISHGCFQTAPFHFSHAGLGDLKISKVPKNPKKILPDEAAETPCEMIKSLGKSELLRLRYMNYPELLVNQCEKLVINACINPTTATLDCVNGELYNDESAKELFRCIIKECVDIFFKCIPLFKNNEEAEKILNVNRLLDRVMFVGTKVNGANSSSTRQDCLLLRETEIDAINGYVVKLAENNGFQATVNKTMMLLTKSRLGLNRCRAHAR.

Residues 9 to 14 (GAGSIG) and asparagine 115 each bind NADP(+). Asparagine 115 is a substrate binding site. Residue lysine 213 is the Proton donor of the active site. Residues asparagine 217, asparagine 221, and serine 295 each coordinate substrate. Position 307 (glutamate 307) interacts with NADP(+).

The protein belongs to the ketopantoate reductase family.

It carries out the reaction (R)-pantoate + NADP(+) = 2-dehydropantoate + NADPH + H(+). The protein operates within cofactor biosynthesis; (R)-pantothenate biosynthesis; (R)-pantoate from 3-methyl-2-oxobutanoate: step 2/2. Catalyzes the NADPH-dependent reduction of ketopantoate into pantoic acid. The protein is Probable 2-dehydropantoate 2-reductase of Schizosaccharomyces pombe (strain 972 / ATCC 24843) (Fission yeast).